A 395-amino-acid chain; its full sequence is Univin (395 aa).

A signal peptide spans 1 to 19; it reads MDVSKVLILTLIWLLTADS. Residues 20–272 constitute a propeptide that is removed on maturation; the sequence is APPDYVTLTR…CSKRNRRNKR (253 aa). Residue N50 is glycosylated (N-linked (GlcNAc...) asparagine). The tract at residues 69 to 97 is disordered; it reads EGAAASRGGETEIGKEEEEDGRPCSETKL. N-linked (GlcNAc...) asparagine glycans are attached at residues N116 and N336. 3 disulfides stabilise this stretch: C294–C360, C323–C392, and C327–C394.

This sequence belongs to the TGF-beta family. In terms of assembly, homodimer; disulfide-linked.

It is found in the secreted. Could have a critical role in early developmental decisions in the sea urchin embryo. This Strongylocentrotus purpuratus (Purple sea urchin) protein is Univin.